A 176-amino-acid chain; its full sequence is PPE family protein PPE57 (176 aa).

Belongs to the mycobacterial PPE family. As to quaternary structure, interacts with human TLR2.

The protein localises to the secreted. Its subcellular location is the cell wall. The protein resides in the cell surface. Its function is as follows. Plays a key role in regulating innate and adaptive immune responses through human Toll-like receptor 2 (TLR2). Interacts with TLR2, leading to the subsequent activation of the mitogen-activated protein kinase (MAPK) and nuclear factor kappa B (NF-kappa-B) signaling pathways. Induces macrophage activation by augmenting the expression of several cell surface molecules (CD40, CD80, CD86 and MHC class II) and pro-inflammatory cytokines (TNF-alpha, IL-6 and IL-12p40) within macrophages. Also participates in adaptive immunity by directing Th1-polarised immune responses. Stimulates specific humoral and cellular immune responses in tuberculosis (TB) patients. Induces a strong IgG(1) antibody response and an increased Th1/Th2 type immune response in mice. This chain is PPE family protein PPE57, found in Mycobacterium tuberculosis (strain ATCC 25618 / H37Rv).